The primary structure comprises 222 residues: Phosphoribosylformylglycinamidine synthase subunit PurQ (222 aa).

One can recognise a Glutamine amidotransferase type-1 domain in the interval 2-222; sequence RTAVIQFPGS…FESLKGALVQ (221 aa). The active-site Nucleophile is C87. Catalysis depends on residues H195 and E197.

Part of the FGAM synthase complex composed of 1 PurL, 1 PurQ and 2 PurS subunits.

Its subcellular location is the cytoplasm. It catalyses the reaction N(2)-formyl-N(1)-(5-phospho-beta-D-ribosyl)glycinamide + L-glutamine + ATP + H2O = 2-formamido-N(1)-(5-O-phospho-beta-D-ribosyl)acetamidine + L-glutamate + ADP + phosphate + H(+). It carries out the reaction L-glutamine + H2O = L-glutamate + NH4(+). It participates in purine metabolism; IMP biosynthesis via de novo pathway; 5-amino-1-(5-phospho-D-ribosyl)imidazole from N(2)-formyl-N(1)-(5-phospho-D-ribosyl)glycinamide: step 1/2. In terms of biological role, part of the phosphoribosylformylglycinamidine synthase complex involved in the purines biosynthetic pathway. Catalyzes the ATP-dependent conversion of formylglycinamide ribonucleotide (FGAR) and glutamine to yield formylglycinamidine ribonucleotide (FGAM) and glutamate. The FGAM synthase complex is composed of three subunits. PurQ produces an ammonia molecule by converting glutamine to glutamate. PurL transfers the ammonia molecule to FGAR to form FGAM in an ATP-dependent manner. PurS interacts with PurQ and PurL and is thought to assist in the transfer of the ammonia molecule from PurQ to PurL. In Deinococcus geothermalis (strain DSM 11300 / CIP 105573 / AG-3a), this protein is Phosphoribosylformylglycinamidine synthase subunit PurQ.